We begin with the raw amino-acid sequence, 466 residues long: Adenosylhomocysteinase (466 aa).

Substrate contacts are provided by T57, D132, and E192. An NAD(+)-binding site is contributed by 193-195 (TTT). Substrate is bound by residues K222 and D226. Residues N227, 256 to 261 (GYGDVG), E279, N314, 335 to 337 (IGH), and N380 contribute to the NAD(+) site.

It belongs to the adenosylhomocysteinase family. The cofactor is NAD(+).

The protein localises to the cytoplasm. It carries out the reaction S-adenosyl-L-homocysteine + H2O = L-homocysteine + adenosine. The protein operates within amino-acid biosynthesis; L-homocysteine biosynthesis; L-homocysteine from S-adenosyl-L-homocysteine: step 1/1. In terms of biological role, may play a key role in the regulation of the intracellular concentration of adenosylhomocysteine. The chain is Adenosylhomocysteinase from Brucella anthropi (strain ATCC 49188 / DSM 6882 / CCUG 24695 / JCM 21032 / LMG 3331 / NBRC 15819 / NCTC 12168 / Alc 37) (Ochrobactrum anthropi).